Reading from the N-terminus, the 487-residue chain is MKKLPNKSLIALALLSVSGASFGHGYVSAYENGVAEGRATLCRVPANDTNEKNTNCGGIEYEPQSVEGPDGFPETGPRDGKIASAENSLAAALDEQTADRWVKRPIQSGNQHFEWNFTANHITKDWKYYITKADWNPNQPLARDSFDLNPFCVVDGGMVKPPMRVSHLCNVPEREGYQVILAVWDVGDTAASFYNVIDVKFDGDSPVLPDWNQGGQIYPSQDLNVGDSVYTRVFGQNGENVSYSTELVIDSEELGAANNWSHALATKINQEQTMLQAGQLNAEGVISPIYGTNPIYLKQGSGLKNVEIDYKINSTAPEYDLEVYGLESEYIIGDSATQLDLTLEATGDIKTEMTVYNHHHESLSSHSAELSDGQVEAATMTLSKSEPGHHMLVVVVKDQQGKVIEQNTLDFHLIEEQTPPPSGEYDFVFPEGLNTYTAGTKVLASDGAVYQCKEFPFSGYCTQWSPSATQFEPGKGSHWSEAWNKVN.

Residues 1-29 (MKKLPNKSLIALALLSVSGASFGHGYVSA) form the signal peptide. In terms of domain architecture, Chitin-binding type-4 spans 30-201 (YENGVAEGRA…SFYNVIDVKF (172 aa)). The Chitin-binding type-3 domain maps to 438-479 (AGTKVLASDGAVYQCKEFPFSGYCTQWSPSATQFEPGKGSHW).

Belongs to the GbpA family.

Its subcellular location is the secreted. Its function is as follows. Probably interacts with GlcNAc residues. May promote attachment to both epithelial cell surfaces and chitin. The polypeptide is GlcNAc-binding protein A (Vibrio campbellii (strain ATCC BAA-1116)).